Reading from the N-terminus, the 417-residue chain is Histidine--tRNA ligase (417 aa).

Belongs to the class-II aminoacyl-tRNA synthetase family. In terms of assembly, homodimer.

It is found in the cytoplasm. It catalyses the reaction tRNA(His) + L-histidine + ATP = L-histidyl-tRNA(His) + AMP + diphosphate + H(+). This Nitratidesulfovibrio vulgaris (strain ATCC 29579 / DSM 644 / CCUG 34227 / NCIMB 8303 / VKM B-1760 / Hildenborough) (Desulfovibrio vulgaris) protein is Histidine--tRNA ligase.